The sequence spans 409 residues: CUB domain-containing protein (409 aa).

Residues 1 to 18 (MFLFSLTVLSALVLITES) form the signal peptide. Over residues 154-229 (TEASTTAQET…TTAPTTAPAP (76 aa)) the composition is skewed to low complexity. The disordered stretch occupies residues 154-230 (TEASTTAQET…TAPTTAPAPI (77 aa)). An intrachain disulfide couples Cys-232 to Cys-257. A CUB domain is found at 232–338 (CGGVLRGRGT…QEYVDYYYYD (107 aa)). Positions 389–409 (VQGAADSESEASASSESSDED) are disordered. Low complexity predominate over residues 392–409 (AADSESEASASSESSDED).

As to expression, component of the acid-insoluble and acid-soluble organic matrix of the aragonitic skeleton (at protein level).

The protein resides in the secreted. In Acropora millepora (Staghorn coral), this protein is CUB domain-containing protein.